The primary structure comprises 473 residues: LETM1 domain-containing protein mdm28, mitochondrial (473 aa).

A mitochondrion-targeting transit peptide spans 1 to 73; it reads MLRNRLFKTP…FYNIGSSRLY (73 aa). Residues 74-161 are Mitochondrial intermembrane-facing; it reads STETPTPSKV…LTRTLKDIGR (88 aa). Residues 162-182 traverse the membrane as a helical segment; it reads LVPFSVFVVVPFAELLLPIAV. Residues 183–473 lie on the Mitochondrial matrix side of the membrane; sequence KLFPNLLPST…ESNIPKNERK (291 aa). The 194-residue stretch at 205-398 folds into the Letm1 RBD domain; that stretch reads QLRKTRNEVS…LQDTLASIPD (194 aa). The interval 430-473 is disordered; that stretch reads EEEAEHVAEHPDLAKKQTEENKATSKPAVSAKSPESNIPKNERK. The span at 434–452 shows a compositional bias: basic and acidic residues; that stretch reads EHVAEHPDLAKKQTEENKA. Residues 462–473 show a composition bias toward polar residues; sequence SPESNIPKNERK.

Its subcellular location is the mitochondrion inner membrane. Involved in mitochondrial potassium homeostasis through the mitochondrial K(+)/H(+) exchange regulation. This chain is LETM1 domain-containing protein mdm28, mitochondrial (mdm28), found in Schizosaccharomyces pombe (strain 972 / ATCC 24843) (Fission yeast).